A 168-amino-acid chain; its full sequence is Small ribosomal subunit protein uS9 (168 aa).

Residues 1–15 (MAQNEETTEAVEAEE) are compositionally biased toward acidic residues. Residues 1–34 (MAQNEETTEAVEAEETLTSYTSESGAAEAAAPKK) form a disordered region.

The protein belongs to the universal ribosomal protein uS9 family.

The chain is Small ribosomal subunit protein uS9 from Arthrobacter sp. (strain FB24).